The chain runs to 539 residues: Dihydrolipoyllysine-residue acetyltransferase component 2 of pyruvate dehydrogenase complex, mitochondrial (539 aa).

The transit peptide at 1 to 102 (MASRIINHSK…SSQMRSVRGF (102 aa)) directs the protein to the mitochondrion. The tract at residues 102-122 (FSSSSDLPPHQEIGMPSLSPT) is disordered. In terms of domain architecture, Lipoyl-binding spans 111–187 (HQEIGMPSLS…QVGEVIAITV (77 aa)). Lysine 152 bears the N6-lipoyllysine mark. The interval 196–244 (FKDYTPSSDTGPAAPEAKPAPSLPKEEKVEKPASAPEAKISKPSSAPSE) is disordered. A Peripheral subunit-binding (PSBD) domain is found at 248–285 (FASPLARKLAEDNNVPLSSIKGTGPEGRIVKADVEDFL). Residues histidine 512 and aspartate 516 contribute to the active site.

It belongs to the 2-oxoacid dehydrogenase family. (R)-lipoate is required as a cofactor.

The protein localises to the mitochondrion matrix. The enzyme catalyses N(6)-[(R)-dihydrolipoyl]-L-lysyl-[protein] + acetyl-CoA = N(6)-[(R)-S(8)-acetyldihydrolipoyl]-L-lysyl-[protein] + CoA. Functionally, the pyruvate dehydrogenase complex catalyzes the overall conversion of pyruvate to acetyl-CoA and CO(2). It contains multiple copies of three enzymatic components: pyruvate dehydrogenase (E1), dihydrolipoamide acetyltransferase (E2) and lipoamide dehydrogenase (E3). The polypeptide is Dihydrolipoyllysine-residue acetyltransferase component 2 of pyruvate dehydrogenase complex, mitochondrial (Arabidopsis thaliana (Mouse-ear cress)).